The following is a 269-amino-acid chain: Centromere protein K (269 aa).

A compositionally biased stretch (acidic residues) spans 1–10 (MNQEDLDPDS). A disordered region spans residues 1–20 (MNQEDLDPDSTTDVGDVTNT). Coiled coils occupy residues 22 to 42 (EELI…QNKL) and 98 to 151 (QKLR…NKVE).

Belongs to the CENP-K/MCM22 family. In terms of assembly, component of the CENPA-CAD complex, composed of CENPI, CENPK, CENPL, CENPO, CENPP, CENPQ, CENPR and CENPS. The CENPA-CAD complex interacts with the CENPA-NAC complex, at least composed of CENPA, CENPC, CENPH, CENPM, CENPN, CENPT and CENPU. Interacts directly with CENPH. In terms of tissue distribution, detected in several fetal organs with highest levels in fetal liver. In adults, it is weakly expressed in lung and placenta.

It is found in the nucleus. Its subcellular location is the chromosome. It localises to the centromere. The protein localises to the kinetochore. In terms of biological role, component of the CENPA-CAD (nucleosome distal) complex, a complex recruited to centromeres which is involved in assembly of kinetochore proteins, mitotic progression and chromosome segregation. May be involved in incorporation of newly synthesized CENPA into centromeres via its interaction with the CENPA-NAC complex. Acts in coordination with KNL1 to recruit the NDC80 complex to the outer kinetochore. This Homo sapiens (Human) protein is Centromere protein K (CENPK).